Here is a 789-residue protein sequence, read N- to C-terminus: Potassium transporter 4 (789 aa).

The Cytoplasmic segment spans residues 1–32 (MAPAESGVSPRRNPSQLSWMNLSSNLILAYQS). The residue at position 9 (Ser-9) is a Phosphoserine. Residues 33–53 (FGVVYGDLSTSPLYVFPSTFI) form a helical membrane-spanning segment. The Extracellular segment spans residues 54-68 (GKLHKHHNEDAVFGA). Residues 69-89 (FSLIFWTLTLIPLLKYLLVLL) form a helical membrane-spanning segment. Topologically, residues 90–154 (SADDNGEGGT…FLEKHKRLRT (65 aa)) are cytoplasmic. Residues 155–175 (ALLLVVLFGAAMVIGDGVLTP) traverse the membrane as a helical segment. The Extracellular portion of the chain corresponds to 176–195 (ALSVLSSLSGLQATEKNVTD). A helical transmembrane segment spans residues 196–216 (GELLVLACVILVGLFALQHCG). Residues 217–219 (THR) lie on the Cytoplasmic side of the membrane. The helical transmembrane segment at 220–240 (VAFMFAPIVIIWLISIFFIGL) threads the bilayer. Residues 241 to 270 (YNIIRWNPKIIHAVSPLYIIKFFRVTGQDG) lie on the Extracellular side of the membrane. A helical membrane pass occupies residues 271–291 (WISLGGVLLSVTGTEAMFANL). Over 292–300 (GHFTSVSIR) the chain is Cytoplasmic. A helical transmembrane segment spans residues 301 to 321 (VAFAVVVYPCLVVQYMGQAAF). The Extracellular portion of the chain corresponds to 322 to 340 (LSKNLGSIPNSFYDSVPDP). Residues 341–361 (VFWPVFVIATLAAIVGSQAVI) form a helical membrane-spanning segment. Residues 362 to 392 (TTTFSIIKQCHALGCFPRIKVVHTSKHIYGQ) are Cytoplasmic-facing. The chain crosses the membrane as a helical span at residues 393-413 (IYIPEINWILMILTLAMAIGF). At 414–424 (RDTTLIGNAYG) the chain is on the extracellular side. Residues 425–445 (IACMVVMFITTFFMALVIVVV) form a helical membrane-spanning segment. The Cytoplasmic portion of the chain corresponds to 446–450 (WQKSC). The helical transmembrane segment at 451–471 (FLAALFLGTLWIIEGVYLSAA) threads the bilayer. At 472 to 478 (LMKVTEG) the chain is on the extracellular side. Residues 479-499 (GWVPFVLTFIFMIAMYVWHYG) traverse the membrane as a helical segment. Over 500-789 (TRRKYSFDLH…LIEVGMIYYV (290 aa)) the chain is Cytoplasmic.

This sequence belongs to the HAK/KUP transporter (TC 2.A.72.3) family. As to expression, detected at very low levels in roots, stems, leaves and flowers of mature plants and strongly expressed in the roots of potassium-starved plants.

The protein resides in the cell membrane. Its function is as follows. High-affinity potassium transporter. This chain is Potassium transporter 4 (POT4), found in Arabidopsis thaliana (Mouse-ear cress).